A 161-amino-acid polypeptide reads, in one-letter code: Large ribosomal subunit protein bL21m (161 aa).

Residues 1-35 constitute a mitochondrion transit peptide; the sequence is MLQLKFIWPVARITPIYRPFTSHPFRNLATSSSIS.

This sequence belongs to the bacterial ribosomal protein bL21 family. In terms of assembly, component of the mitochondrial large ribosomal subunit (mt-LSU). Mature yeast 74S mitochondrial ribosomes consist of a small (37S) and a large (54S) subunit. The 37S small subunit contains a 15S ribosomal RNA (15S mt-rRNA) and 34 different proteins. The 54S large subunit contains a 21S rRNA (21S mt-rRNA) and 46 different proteins.

It is found in the mitochondrion. Its function is as follows. Component of the mitochondrial ribosome (mitoribosome), a dedicated translation machinery responsible for the synthesis of mitochondrial genome-encoded proteins, including at least some of the essential transmembrane subunits of the mitochondrial respiratory chain. The mitoribosomes are attached to the mitochondrial inner membrane and translation products are cotranslationally integrated into the membrane. The sequence is that of Large ribosomal subunit protein bL21m (MRPL49) from Saccharomyces cerevisiae (strain ATCC 204508 / S288c) (Baker's yeast).